We begin with the raw amino-acid sequence, 262 residues long: Phosphonates import ATP-binding protein PhnC (262 aa).

An ABC transporter domain is found at 5 to 253 (IRVEKLAKTF…RFDHLYRSIN (249 aa)). 37-44 (GPSGSGKS) contacts ATP.

This sequence belongs to the ABC transporter superfamily. Phosphonates importer (TC 3.A.1.9.1) family. In terms of assembly, the complex is composed of two ATP-binding proteins (PhnC), two transmembrane proteins (PhnE) and a solute-binding protein (PhnD).

It is found in the cell inner membrane. The enzyme catalyses phosphonate(out) + ATP + H2O = phosphonate(in) + ADP + phosphate + H(+). Part of the ABC transporter complex PhnCDE involved in phosphonates import. Responsible for energy coupling to the transport system. This is Phosphonates import ATP-binding protein PhnC from Shigella dysenteriae serotype 1 (strain Sd197).